We begin with the raw amino-acid sequence, 159 residues long: MKLNEIRDNEGSSKDRIRVGRGIGSGKGKTGGRGVKGQKARSGVAINGFEGGQMPIYRRLPKRGFNNIFGSEFAVVSLGRIQTAIDAKKLDASATIDAAALKAAGVIRRVKDGVRILADGELTSKVAFEVAGASKPALEKIEKAGSSIKLLAVAVEASE.

Basic and acidic residues predominate over residues 1-18 (MKLNEIRDNEGSSKDRIR). Residues 1 to 37 (MKLNEIRDNEGSSKDRIRVGRGIGSGKGKTGGRGVKG) are disordered. Over residues 21–35 (RGIGSGKGKTGGRGV) the composition is skewed to gly residues.

It belongs to the universal ribosomal protein uL15 family. As to quaternary structure, part of the 50S ribosomal subunit.

In terms of biological role, binds to the 23S rRNA. The polypeptide is Large ribosomal subunit protein uL15 (Agrobacterium fabrum (strain C58 / ATCC 33970) (Agrobacterium tumefaciens (strain C58))).